Here is a 144-residue protein sequence, read N- to C-terminus: Antigenic protein SchS21 (144 aa).

Residue Asn36 is glycosylated (N-linked (GlcNAc...) asparagine). The segment at 91 to 105 is igE-binding epitope; the sequence is VKQMWPAESRKPMSG.

As to quaternary structure, homodimer. It depends on Mg(2+) as a cofactor.

It is found in the secreted. Functionally, has exodeoxyribonuclease activity with lambda-DNA and salmon testes dsDNA. No activity with circular plasmid DNA. The physiological role of this enzyme may be to degrade environmental DNA, and thus mobilize nitrogen for uptake. The protein is Antigenic protein SchS21 of Stachybotrys chartarum (Toxic black mold).